The primary structure comprises 285 residues: Inositol oxygenase (285 aa).

The disordered stretch occupies residues 1–28 (MKVAADPDPSLVSQRDMEPEAAKDKDSF). Over residues 15–28 (RDMEPEAAKDKDSF) the composition is skewed to basic and acidic residues. R29 is a substrate binding site. S33 is subject to Phosphoserine. Residue 85–87 (DES) coordinates substrate. The Fe cation site is built by H98, H123, and D124. Substrate is bound by residues K127 and 141–142 (GD). Residues H194, H220, and D253 each coordinate Fe cation. Residue 220–221 (HS) coordinates substrate.

It belongs to the myo-inositol oxygenase family. Fe cation serves as cofactor.

The protein resides in the cytoplasm. It catalyses the reaction myo-inositol + O2 = D-glucuronate + H2O + H(+). Its pathway is polyol metabolism; myo-inositol degradation into D-glucuronate; D-glucuronate from myo-inositol: step 1/1. In Bos taurus (Bovine), this protein is Inositol oxygenase (MIOX).